The sequence spans 161 residues: Protein-export protein SecB (161 aa).

It belongs to the SecB family. Homotetramer, a dimer of dimers. One homotetramer interacts with 1 SecA dimer.

The protein resides in the cytoplasm. Its function is as follows. One of the proteins required for the normal export of preproteins out of the cell cytoplasm. It is a molecular chaperone that binds to a subset of precursor proteins, maintaining them in a translocation-competent state. It also specifically binds to its receptor SecA. This is Protein-export protein SecB from Ectopseudomonas mendocina (strain ymp) (Pseudomonas mendocina).